The sequence spans 389 residues: Flavin-dependent monooxygenase (389 aa).

Residues 12 to 15, 34 to 35, Q44, R105, Y267, and D289 each bind FAD; these read AGVA and EK.

This sequence belongs to the aromatic-ring hydroxylase family. FAD is required as a cofactor.

The catalysed reaction is a tetracycline + NADPH + O2 + H(+) = a (1S,10aS)-3-(CONH2)-1-(Me2N)-3,3a,4,6-(HO)4-2,5-dioxo-1H,10aH,11H,11aH-cyclopenta[b]anthracene + CO + NADP(+) + H2O. The enzyme catalyses 7-chlorotetracycline + NADPH + O2 + H(+) = (1S,10S,10aS)-3-(CONH2)-9-Cl-1-(Me2N)-3,3a,4,10-(HO)4-10-Me-2,5-dioxo-1H,10aH,11H,11aH-cyclopenta[b]anthracen-6-olate + CO + NADP(+) + H2O. Its activity is regulated as follows. Inhibited by anhydrotetracycline. An FAD-requiring monooxygenase active on tetracycline antibiotic and some of its derivatives, which leads to their inactivation. Expression in E.coli confers high resistance to tetracycline and oxytetracycline, does not confer resistance to minocycline or tigecycline. The reaction requires NADPH. Expression in L.pneumophila confers resistance to tetracycline. Degrades and confers resistance to tetracycline and chlortetracycline. In Legionella longbeachae serogroup 1 (strain NSW150), this protein is Flavin-dependent monooxygenase (tet(56)).